We begin with the raw amino-acid sequence, 346 residues long: Uroporphyrinogen decarboxylase (346 aa).

Residues 23-27 (RQAGR), Asp-73, Tyr-151, Ser-206, and His-321 each bind substrate.

It belongs to the uroporphyrinogen decarboxylase family. In terms of assembly, homodimer.

The protein localises to the cytoplasm. The enzyme catalyses uroporphyrinogen III + 4 H(+) = coproporphyrinogen III + 4 CO2. Its pathway is porphyrin-containing compound metabolism; protoporphyrin-IX biosynthesis; coproporphyrinogen-III from 5-aminolevulinate: step 4/4. Catalyzes the decarboxylation of four acetate groups of uroporphyrinogen-III to yield coproporphyrinogen-III. This chain is Uroporphyrinogen decarboxylase, found in Sulfurovum sp. (strain NBC37-1).